Consider the following 338-residue polypeptide: Fructose-1,6-bisphosphatase class 1 (338 aa).

Mg(2+) contacts are provided by E91, D113, L115, and D116. Residues 116–119 (DGSS), N208, and K274 contribute to the substrate site. Residue E280 coordinates Mg(2+).

The protein belongs to the FBPase class 1 family. In terms of assembly, homotetramer. It depends on Mg(2+) as a cofactor.

Its subcellular location is the cytoplasm. It catalyses the reaction beta-D-fructose 1,6-bisphosphate + H2O = beta-D-fructose 6-phosphate + phosphate. It participates in carbohydrate biosynthesis; gluconeogenesis. In Ralstonia nicotianae (strain ATCC BAA-1114 / GMI1000) (Ralstonia solanacearum), this protein is Fructose-1,6-bisphosphatase class 1.